The primary structure comprises 1116 residues: Phosphatidylinositol 4-kinase beta 2 (1116 aa).

The PIK helical domain occupies 1-143 (MQMAQFLSLV…SRIQEKCQIA (143 aa)). A run of 8 repeats spans residues 210-229 (ADDNKIFKRLIPSPKVRDAL), 242-261 (CEKDGFFKRLLRDSRGEDDE), 264-283 (SNSEGFFKRLLKDNKSEEEE), 286-304 (NNSEGFFKRLRSSKGDEEE), 307-326 (SSSDGFFKRLLRDNKGDEEE), 329-348 (ANSEGFFKKLLRDSKNEDEE), 351-370 (ANTEGFFKKLFHESKNEDDK), and 378-396 (EEKDGFLKKLFKEKFDEKR). The segment at 210–507 (ADDNKIFKRL…FRDRDRSVED (298 aa)) is 11 X 20 AA approximate repeats (PPC). Positions 394-404 (EKRNGNERNET) are enriched in basic and acidic residues. Residues 394 to 417 (EKRNGNERNETDETVYTDETSGED) form a disordered region. A compositionally biased stretch (acidic residues) spans 405-415 (DETVYTDETSG). Residues 418–436 (NGREGFFKKLFKEKFEDKP) form repeat 9. A phosphoserine mark is found at Ser-447 and Ser-452. 2 consecutive repeat copies span residues 452–470 (SSEFSLFRRLFRRHPEDVK) and 488–507 (PGTENFFRKLFRDRDRSVED). Disordered regions lie at residues 515–540 (KYKEKCPGSPKPQNNTPSKKPPLPNN) and 794–813 (GEAPPGLPLKGAGQDSSDAQ). One can recognise a PI3K/PI4K catalytic domain in the interval 830–1101 (EFWEGKRLRI…LISSSLDAWR (272 aa)). Residues 836-842 (RLRIRKD) form a G-loop region. Residues 964–972 (QIKDRHNGN) are catalytic loop. The activation loop stretch occupies residues 983-1007 (HIDFGFMLSNSPGGVNFESAPFKLT).

It belongs to the PI3/PI4-kinase family. Type III PI4K subfamily.

The protein localises to the cell membrane. The protein resides in the golgi apparatus. Its subcellular location is the trans-Golgi network. It localises to the cytoplasmic vesicle membrane. The enzyme catalyses a 1,2-diacyl-sn-glycero-3-phospho-(1D-myo-inositol) + ATP = a 1,2-diacyl-sn-glycero-3-phospho-(1D-myo-inositol 4-phosphate) + ADP + H(+). In terms of biological role, acts on phosphatidylinositol (PtdIns) in the first committed step in the production of the second messenger inositol-1,4,5-trisphosphate. Necessary for proper organization of the trans-Golgi network (TGN) and post-Golgi secretion in root hairs. Together with PI4KB1, required during polarized root hair expansion and pollen tube elongation. Functions redundantly with PI4KB1 upstream of the cold response phosphoinositide-dependent phospholipase C (PI-PLC) pathway. This is Phosphatidylinositol 4-kinase beta 2 (PI4KB2) from Arabidopsis thaliana (Mouse-ear cress).